Consider the following 368-residue polypeptide: DNA replication and repair protein RecF (368 aa).

Residue glycine 30–threonine 37 participates in ATP binding.

It belongs to the RecF family.

Its subcellular location is the cytoplasm. Its function is as follows. The RecF protein is involved in DNA metabolism; it is required for DNA replication and normal SOS inducibility. RecF binds preferentially to single-stranded, linear DNA. It also seems to bind ATP. This is DNA replication and repair protein RecF from Xanthomonas oryzae pv. oryzae (strain KACC10331 / KXO85).